The chain runs to 211 residues: Small ribosomal subunit protein eS1 (211 aa).

Belongs to the eukaryotic ribosomal protein eS1 family.

The chain is Small ribosomal subunit protein eS1 from Archaeoglobus fulgidus (strain ATCC 49558 / DSM 4304 / JCM 9628 / NBRC 100126 / VC-16).